Here is a 355-residue protein sequence, read N- to C-terminus: UDP-N-acetylglucosamine--N-acetylmuramyl-(pentapeptide) pyrophosphoryl-undecaprenol N-acetylglucosamine transferase (355 aa).

Residues 13–15 (TGG), Asn125, Arg162, Ser190, Ile244, and Gln289 contribute to the UDP-N-acetyl-alpha-D-glucosamine site.

The protein belongs to the glycosyltransferase 28 family. MurG subfamily.

It is found in the cell inner membrane. It catalyses the reaction di-trans,octa-cis-undecaprenyl diphospho-N-acetyl-alpha-D-muramoyl-L-alanyl-D-glutamyl-meso-2,6-diaminopimeloyl-D-alanyl-D-alanine + UDP-N-acetyl-alpha-D-glucosamine = di-trans,octa-cis-undecaprenyl diphospho-[N-acetyl-alpha-D-glucosaminyl-(1-&gt;4)]-N-acetyl-alpha-D-muramoyl-L-alanyl-D-glutamyl-meso-2,6-diaminopimeloyl-D-alanyl-D-alanine + UDP + H(+). It participates in cell wall biogenesis; peptidoglycan biosynthesis. Cell wall formation. Catalyzes the transfer of a GlcNAc subunit on undecaprenyl-pyrophosphoryl-MurNAc-pentapeptide (lipid intermediate I) to form undecaprenyl-pyrophosphoryl-MurNAc-(pentapeptide)GlcNAc (lipid intermediate II). The sequence is that of UDP-N-acetylglucosamine--N-acetylmuramyl-(pentapeptide) pyrophosphoryl-undecaprenol N-acetylglucosamine transferase from Neisseria meningitidis serogroup C (strain 053442).